Consider the following 395-residue polypeptide: Endophilin-B2 (395 aa).

Met1 is modified (N-acetylmethionine). The interval 1–27 is membrane-binding amphipathic helix; sequence MDFNMKKLASDAGIFFTRAVQFTEEKF. At Ser10 the chain carries Phosphoserine. A BAR domain is found at 24 to 287; sequence EEKFGQAEKT…LGRFPGTFVG (264 aa). Coiled-coil stretches lie at residues 116 to 132 and 206 to 240; these read IKVAEAEKQLGAAERDF and ASALWNDEVDKAEQELRVAQTEFDRQAEVTRLLLE. The SH3 domain occupies 335–395; that stretch reads SGTRKARVLY…VPVTYLELLS (61 aa). A Phosphoserine modification is found at Ser395.

It belongs to the endophilin family. Homodimer, and heterodimer with SH3GLB1. As to expression, detected in skeletal muscle, adipocyte, brain, lung, colon and mammary gland.

Its subcellular location is the cytoplasm. This is Endophilin-B2 (SH3GLB2) from Homo sapiens (Human).